We begin with the raw amino-acid sequence, 230 residues long: Urease accessory protein UreF (230 aa).

Belongs to the UreF family. As to quaternary structure, ureD, UreF and UreG form a complex that acts as a GTP-hydrolysis-dependent molecular chaperone, activating the urease apoprotein by helping to assemble the nickel containing metallocenter of UreC. The UreE protein probably delivers the nickel.

It localises to the cytoplasm. In terms of biological role, required for maturation of urease via the functional incorporation of the urease nickel metallocenter. The sequence is that of Urease accessory protein UreF from Marinomonas sp. (strain MWYL1).